The chain runs to 195 residues: Imidazoleglycerol-phosphate dehydratase (195 aa).

It belongs to the imidazoleglycerol-phosphate dehydratase family.

The protein localises to the cytoplasm. The enzyme catalyses D-erythro-1-(imidazol-4-yl)glycerol 3-phosphate = 3-(imidazol-4-yl)-2-oxopropyl phosphate + H2O. The protein operates within amino-acid biosynthesis; L-histidine biosynthesis; L-histidine from 5-phospho-alpha-D-ribose 1-diphosphate: step 6/9. This chain is Imidazoleglycerol-phosphate dehydratase, found in Clostridium botulinum (strain Alaska E43 / Type E3).